The primary structure comprises 408 residues: Potassium channel subfamily K member 13 (408 aa).

Residues 1 to 19 (MAGRGFSWGPGHLNEDNAR) are Cytoplasmic-facing. Residues 20–40 (FLLLAALIVLYLLGGAAVFSA) traverse the membrane as a helical segment. Residues Asn-59 and Asn-65 are each glycosylated (N-linked (GlcNAc...) asparagine). An intramembrane region (pore-forming) is located at residues 95-115 (WDFTGAFYFVGTVVSTIGFGM). Positions 110, 111, and 112 each coordinate K(+). The interval 110–115 (TIGFGM) is selectivity filter 1. The helical transmembrane segment at 125–145 (IFLIFYGLVGCSSTILFFNLF) threads the bilayer. The Cytoplasmic portion of the chain corresponds to 146 to 193 (LERLITIIAYIMKSCHQRQLRRRGALPQESLKDAGQCEVDSLAGWKPS). Residues 194-214 (VYYVMLILCTASILISCCASA) form a helical membrane-spanning segment. The segment at residues 224–244 (YFDSLYFCFVAFSTIGFGDLV) is an intramembrane region (pore-forming). Positions 237, 238, 239, and 240 each coordinate K(+). Residues 237–242 (TIGFGD) are selectivity filter 2. Residues 263–283 (VFILMGVCCIYSLFNVISILI) traverse the membrane as a helical segment. Residues 284–408 (KQSLNWILRK…NRLAETSGDR (125 aa)) are Cytoplasmic-facing.

The protein belongs to the two pore domain potassium channel (TC 1.A.1.8) family. As to quaternary structure, homodimer. Heterodimer with KCNK12. Expressed in microglia (at protein level).

The protein resides in the cell membrane. It carries out the reaction K(+)(in) = K(+)(out). With respect to regulation, the channel conductance is activated by arachidonic acid and inhibited by Ba(2+) ions, volatile anesthetics such as halothane and antiarrhythmic drugs mexiletine and lidocaine. Insensitive to extracellular pH change. Functionally, k(+) channel that conducts outward rectifying tonic currents potentiated by purinergic signals. Homo- and heterodimerizes to form functional channels with distinct regulatory and gating properties. Contributes most of K(+) currents at the plasma membrane of resting microglia. Maintains a depolarized membrane potential required for proper ramified microglia morphology and phagocytosis, selectively mediating microglial pruning of presynaptic compartments at hippocampal excitatory synapses. Upon local release of ATP caused by neuronal injury or infection, it is potentiated by P2RY12 and P2RX7 receptor signaling and contributes to ATP-triggered K(+) efflux underlying microglial NLRP3 inflammasome assembly and IL1B release. The sequence is that of Potassium channel subfamily K member 13 from Homo sapiens (Human).